The following is a 152-amino-acid chain: Superoxide dismutase [Cu-Zn] 2 (152 aa).

H45, H47, and H62 together coordinate Cu cation. An intrachain disulfide couples C56 to C145. H62, H70, H79, and D82 together coordinate Zn(2+). Residue H119 participates in Cu cation binding.

This sequence belongs to the Cu-Zn superoxide dismutase family. Homodimer. It depends on Cu cation as a cofactor. Requires Zn(2+) as cofactor.

It localises to the cytoplasm. It carries out the reaction 2 superoxide + 2 H(+) = H2O2 + O2. Its function is as follows. Destroys radicals which are normally produced within the cells and which are toxic to biological systems. In Solanum lycopersicum (Tomato), this protein is Superoxide dismutase [Cu-Zn] 2 (SODCC.5).